We begin with the raw amino-acid sequence, 314 residues long: Ketimine reductase mu-crystallin (314 aa).

Arginine 47 contacts 3,3',5-triiodo-L-thyronine. Residues aspartate 82, histidine 92, arginine 119, alanine 144, valine 146, glutamine 147, asparagine 168, arginine 169, threonine 170, asparagine 173, threonine 205, leucine 206, valine 226, and alanine 228 each contribute to the NADPH site. 3,3',5-triiodo-L-thyronine is bound at residue glutamate 257. Serine 292 provides a ligand contact to NADPH.

Belongs to the ornithine cyclodeaminase/mu-crystallin family. Homodimer. Binds the thyroid hormone triiodothyronine (T3); T3 binding inhibits enzymatic activity. In terms of tissue distribution, expressed in neural tissues, muscle and kidney. Expressed in the inner ear.

It localises to the cytoplasm. The catalysed reaction is L-pipecolate + NADP(+) = Delta(1)-piperideine-2-carboxylate + NADPH + H(+). It catalyses the reaction L-pipecolate + NAD(+) = Delta(1)-piperideine-2-carboxylate + NADH + H(+). The enzyme catalyses L-proline + NADP(+) = 1-pyrroline-2-carboxylate + NADPH + H(+). It carries out the reaction L-proline + NAD(+) = 1-pyrroline-2-carboxylate + NADH + H(+). The catalysed reaction is (3R)-1,4-thiomorpholine-3-carboxylate + NAD(+) = 3,4-dehydrothiomorpholine-3-carboxylate + NADH + 2 H(+). It catalyses the reaction (3R)-1,4-thiomorpholine-3-carboxylate + NADP(+) = 3,4-dehydrothiomorpholine-3-carboxylate + NADPH + 2 H(+). The enzyme catalyses (S)-cystathionine ketimine + NADH + 2 H(+) = (3R,5S)-2,3,5,6,7-pentahydro-1,4-thiazepine-3,5-dicarboxylate + NAD(+). It carries out the reaction (S)-cystathionine ketimine + NADPH + 2 H(+) = (3R,5S)-2,3,5,6,7-pentahydro-1,4-thiazepine-3,5-dicarboxylate + NADP(+). The catalysed reaction is (R)-lanthionine ketimine + NADPH + 2 H(+) = (3R,5R)-1,4-thiomorpholine-3,5-dicarboxylate + NADP(+). It catalyses the reaction Delta(2)-thiazoline-2-carboxylate + NADPH + 2 H(+) = L-thiazolidine-2-carboxylate + NADP(+). Inhibited by thyroid hormones triiodothyronine (T3) and thyroxine (T4). Its function is as follows. Catalyzes the NAD(P)H-dependent reduction of imine double bonds of a number of cyclic ketimine substrates, including sulfur-containing cyclic ketimines. Under physiological conditions, it efficiently catalyzes delta(1)-piperideine-2-carboxylate (P2C) and delta(1)-pyrroline-2-carboxylate (Pyr2C) reduction, suggesting a central role in lysine and glutamate metabolism. Additional substrates are delta(2)-thiazoline-2-carboxylate (T2C), 3,4-dehydrothiomorpholine-3-carboxylate (AECK), and (R)-lanthionine ketimine (LK) that is reduced at very low rate compared to other substrates. Also catalyzes the NAD(P)H-dependent reduction of (S)-cystathionine ketimine (CysK). This chain is Ketimine reductase mu-crystallin, found in Homo sapiens (Human).